The primary structure comprises 155 residues: Large ribosomal subunit protein uL30 (155 aa).

Belongs to the universal ribosomal protein uL30 family. As to quaternary structure, part of the 50S ribosomal subunit.

The protein is Large ribosomal subunit protein uL30 of Pyrococcus abyssi (strain GE5 / Orsay).